We begin with the raw amino-acid sequence, 444 residues long: E3 ubiquitin-protein ligase RNFT2 (444 aa).

At M1 to H181 the chain is on the extracellular side. Disordered regions lie at residues M13–D41 and P92–P149. Residues Y107 to H121 show a composition bias toward basic residues. A compositionally biased stretch (basic and acidic residues) spans G131 to E140. The chain crosses the membrane as a helical span at residues K182–L202. At R203–V214 the chain is on the cytoplasmic side. A helical membrane pass occupies residues L215 to F235. At S236 to D255 the chain is on the extracellular side. The helical transmembrane segment at F256–A276 threads the bilayer. Over L277 to S329 the chain is Cytoplasmic. The chain crosses the membrane as a helical span at residues Y330–G350. Over R351 to Y444 the chain is Extracellular. The segment at C384 to R422 adopts an RING-type zinc-finger fold.

Its subcellular location is the membrane. In terms of biological role, E3 ubiquitin-protein ligase that negatively regulates IL3-dependent cellular responses through IL3RA ubiquitination and degradation by the proteasome, having an anti-inflammatory effect. The sequence is that of E3 ubiquitin-protein ligase RNFT2 from Homo sapiens (Human).